Here is a 233-residue protein sequence, read N- to C-terminus: Large ribosomal subunit protein uL1 (233 aa).

This sequence belongs to the universal ribosomal protein uL1 family. In terms of assembly, part of the 50S ribosomal subunit.

In terms of biological role, binds directly to 23S rRNA. The L1 stalk is quite mobile in the ribosome, and is involved in E site tRNA release. Protein L1 is also a translational repressor protein, it controls the translation of the L11 operon by binding to its mRNA. The protein is Large ribosomal subunit protein uL1 of Vibrio vulnificus (strain CMCP6).